A 183-amino-acid polypeptide reads, in one-letter code: Cell division protein ZapC (183 aa).

Belongs to the ZapC family. As to quaternary structure, interacts directly with FtsZ.

It localises to the cytoplasm. Its function is as follows. Contributes to the efficiency of the cell division process by stabilizing the polymeric form of the cell division protein FtsZ. Acts by promoting interactions between FtsZ protofilaments and suppressing the GTPase activity of FtsZ. This is Cell division protein ZapC from Xenorhabdus bovienii (strain SS-2004) (Xenorhabdus nematophila subsp. bovienii).